The following is a 59-amino-acid chain: UPF0181 protein YoaH (59 aa).

This sequence belongs to the UPF0181 family.

The chain is UPF0181 protein YoaH from Shigella flexneri serotype 5b (strain 8401).